A 236-amino-acid polypeptide reads, in one-letter code: Small ribosomal subunit protein uS2c (236 aa).

It belongs to the universal ribosomal protein uS2 family.

It is found in the plastid. It localises to the chloroplast. This is Small ribosomal subunit protein uS2c (rps2) from Pisum sativum (Garden pea).